The chain runs to 311 residues: MLRTTVRTLRQRAFFHRSFVHVNLPELHSAIQDAQTTCYCQSINARLPSTTDPLDPQIKLPHRTPNYNKHVLLVSPGDKLAQPWKIAWNHNLDTNLNRPYNAIGKLRSYLRNSPGILINAVHLQNEFVPRPKEGDKWLFFFVIPDMKLYKIRETDLEEFASFLDEGVVQAPRLSFQDYLIGKAKVPQETQQVHHKNLTKFQGDIFLRDWSLVCGHYKRDAKCGEMGPDIIAAFQDEKLLTDNNLGLISHVGGHVFAGNVIFYKLFKAENALNKLDSLWFGKVYPHNLKLLCENLENGKIIDEMYRGGISMN.

This sequence belongs to the AIM32 family.

This chain is Altered inheritance of mitochondria protein 32 (AIM32), found in Saccharomyces kudriavzevii (strain ATCC MYA-4449 / AS 2.2408 / CBS 8840 / NBRC 1802 / NCYC 2889) (Yeast).